The following is a 213-amino-acid chain: Thiamine-phosphate synthase (213 aa).

4-amino-2-methyl-5-(diphosphooxymethyl)pyrimidine-binding positions include 38–42 (QLRIK) and asparagine 70. Residues aspartate 71 and aspartate 90 each coordinate Mg(2+). Position 109 (serine 109) interacts with 4-amino-2-methyl-5-(diphosphooxymethyl)pyrimidine. 2-[(2R,5Z)-2-carboxy-4-methylthiazol-5(2H)-ylidene]ethyl phosphate is bound at residue 135–137 (TQT). 4-amino-2-methyl-5-(diphosphooxymethyl)pyrimidine is bound at residue lysine 138. Residues glycine 168 and 188 to 189 (VS) contribute to the 2-[(2R,5Z)-2-carboxy-4-methylthiazol-5(2H)-ylidene]ethyl phosphate site.

Belongs to the thiamine-phosphate synthase family. The cofactor is Mg(2+).

It carries out the reaction 2-[(2R,5Z)-2-carboxy-4-methylthiazol-5(2H)-ylidene]ethyl phosphate + 4-amino-2-methyl-5-(diphosphooxymethyl)pyrimidine + 2 H(+) = thiamine phosphate + CO2 + diphosphate. The catalysed reaction is 2-(2-carboxy-4-methylthiazol-5-yl)ethyl phosphate + 4-amino-2-methyl-5-(diphosphooxymethyl)pyrimidine + 2 H(+) = thiamine phosphate + CO2 + diphosphate. It catalyses the reaction 4-methyl-5-(2-phosphooxyethyl)-thiazole + 4-amino-2-methyl-5-(diphosphooxymethyl)pyrimidine + H(+) = thiamine phosphate + diphosphate. Its pathway is cofactor biosynthesis; thiamine diphosphate biosynthesis; thiamine phosphate from 4-amino-2-methyl-5-diphosphomethylpyrimidine and 4-methyl-5-(2-phosphoethyl)-thiazole: step 1/1. Condenses 4-methyl-5-(beta-hydroxyethyl)thiazole monophosphate (THZ-P) and 2-methyl-4-amino-5-hydroxymethyl pyrimidine pyrophosphate (HMP-PP) to form thiamine monophosphate (TMP). The sequence is that of Thiamine-phosphate synthase from Pectobacterium atrosepticum (strain SCRI 1043 / ATCC BAA-672) (Erwinia carotovora subsp. atroseptica).